The following is a 309-amino-acid chain: MRDLPFTLDQLRILKAIVKEGSFKRAADSLYVSQPAISLQIQNLEKQLNIPLFERSNKKATLTEAGNLLLRYGGRILALCEETCRALEDVQNLQGGNLVIGASQTTGTYLMPRLIGLFRQRYPQVNVQLQVHSTRLISWSVANGQVDLAVIGGEVPNELKDTLQVTSYAEDELALILPTSHVFSKLPDIQKEDLYRLRFIALDTQSTIRKVIDKILIQHDIDSSRFKIEMELNSIEAIKNAVQSGLGAAFVSVSAIAKELELGILHWAKIENVTIKRMLSIIINPNRYKSKAAETFSKEILTLFVTPAA.

In terms of domain architecture, HTH lysR-type spans 6-63; sequence FTLDQLRILKAIVKEGSFKRAADSLYVSQPAISLQIQNLEKQLNIPLFERSNKKATLT. A DNA-binding region (H-T-H motif) is located at residues 23-42; sequence FKRAADSLYVSQPAISLQIQ.

It belongs to the LysR transcriptional regulatory family.

The protein resides in the plastid. The protein localises to the chloroplast. Trans-acting transcriptional regulator of RuBisCO genes (rbcL and rbcS) expression. This chain is Probable RuBisCO transcriptional regulator (rbcR), found in Gracilaria tenuistipitata var. liui (Red alga).